Consider the following 245-residue polypeptide: Orotidine 5'-phosphate decarboxylase (245 aa).

Residues aspartate 22, lysine 44, 71-80 (DLKFHDIPNT), threonine 131, arginine 192, glutamine 201, glycine 221, and arginine 222 contribute to the substrate site. Catalysis depends on lysine 73, which acts as the Proton donor.

Belongs to the OMP decarboxylase family. Type 1 subfamily. In terms of assembly, homodimer.

The enzyme catalyses orotidine 5'-phosphate + H(+) = UMP + CO2. It participates in pyrimidine metabolism; UMP biosynthesis via de novo pathway; UMP from orotate: step 2/2. Functionally, catalyzes the decarboxylation of orotidine 5'-monophosphate (OMP) to uridine 5'-monophosphate (UMP). The chain is Orotidine 5'-phosphate decarboxylase from Shigella flexneri serotype 5b (strain 8401).